The following is a 56-amino-acid chain: Large ribosomal subunit protein bL32c (56 aa).

The protein belongs to the bacterial ribosomal protein bL32 family.

Its subcellular location is the plastid. It localises to the chloroplast. This chain is Large ribosomal subunit protein bL32c, found in Platanus occidentalis (Sycamore).